The primary structure comprises 657 residues: THO complex subunit 1 (657 aa).

An N-acetylmethionine modification is found at Met1. Ser2 carries the phosphoserine modification. Thr4 carries the post-translational modification Phosphothreonine. Residue Lys31 forms a Glycyl lysine isopeptide (Lys-Gly) (interchain with G-Cter in SUMO2) linkage. An N6-acetyllysine modification is found at Lys133. The dock domain; interaction with THOC2 stretch occupies residues Lys133–Phe167. The segment at Gln194–Ala222 is disordered. A compositionally biased stretch (acidic residues) spans Arg206 to Ala222. The tract at residues Ser227–Pro397 is dock domain; interaction with THOC2. Position 300 is an N6-acetyllysine (Lys300). Residue Lys408 forms a Glycyl lysine isopeptide (Lys-Gly) (interchain with G-Cter in SUMO2) linkage. The Nuclear localization signal signature appears at Arg414–Lys430. Residues Leu533–Val569 are disordered. Ser537 is modified (phosphoserine). Thr542 bears the Phosphothreonine mark. Residues Ala553–Val569 show a composition bias toward basic and acidic residues. At Ser560 the chain carries Phosphoserine. The Death domain maps to Thr570–Asn653. Lys580 participates in a covalent cross-link: Glycyl lysine isopeptide (Lys-Gly) (interchain with G-Cter in SUMO2). Lys595 is covalently cross-linked (Glycyl lysine isopeptide (Lys-Gly) (interchain with G-Cter in SUMO1); alternate). Lys595 is covalently cross-linked (Glycyl lysine isopeptide (Lys-Gly) (interchain with G-Cter in SUMO2); alternate).

The protein belongs to the THOC1 family. As to quaternary structure, component of the THO subcomplex, which is composed of THOC1, THOC2, THOC3, THOC5, THOC6 and THOC7. The THO subcomplex interacts with DDX39B to form the THO-DDX39B complex which multimerizes into a 28-subunit tetrameric assembly. Component of the transcription/export (TREX) complex at least composed of ALYREF/THOC4, DDX39B, SARNP/CIP29, CHTOP and the THO subcomplex; in the complex interacts with THOC2, THOC5 and THOC7. TREX seems to have a dynamic structure involving ATP-dependent remodeling. Binds to the hypophosphorylated form of RB1. Interacts with RNA polymerase II. Interacts with LUZP4. In terms of processing, expression is altered specifically during apoptosis and is accompanied by the appearance of novel forms with smaller apparent molecular mass. Polyubiquitinated, leading to proteasomal degradation; probably involves NEDD4. Ubiquitous. Expressed in various cancer cell lines. Expressed at very low levels in normal breast epithelial cells and highly expressed in breast tumors. Expression is strongly associated with an aggressive phenotype of breast tumors and expression correlates with tumor size and the metastatic state of the tumor progression.

The protein resides in the nucleus speckle. The protein localises to the nucleus. It localises to the nucleoplasm. It is found in the nucleus matrix. Its subcellular location is the cytoplasm. Functionally, component of the THO subcomplex of the TREX complex which is thought to couple mRNA transcription, processing and nuclear export, and which specifically associates with spliced mRNA and not with unspliced pre-mRNA. Required for efficient export of polyadenylated RNA. The THOC1-THOC2-THOC3 core complex alone is sufficient to bind export factor NXF1-NXT1 and promote ATPase activity of DDX39B/UAP56. TREX is recruited to spliced mRNAs by a transcription-independent mechanism, binds to mRNA upstream of the exon-junction complex (EJC) and is recruited in a splicing- and cap-dependent manner to a region near the 5' end of the mRNA where it functions in mRNA export to the cytoplasm via the TAP/NXF1 pathway. Regulates transcriptional elongation of a subset of genes. Involved in genome stability by preventing co-transcriptional R-loop formation. May play a role in hair cell formation, hence may be involved in hearing. Its function is as follows. Participates in an apoptotic pathway which is characterized by activation of caspase-6, increases in the expression of BAK1 and BCL2L1 and activation of NF-kappa-B. This pathway does not require p53/TP53, nor does the presence of p53/TP53 affect the efficiency of cell killing. Activates a G2/M cell cycle checkpoint prior to the onset of apoptosis. Apoptosis is inhibited by association with RB1. (Microbial infection) The TREX complex is essential for the export of Kaposi's sarcoma-associated herpesvirus (KSHV) intronless mRNAs and infectious virus production. The sequence is that of THO complex subunit 1 (THOC1) from Homo sapiens (Human).